The chain runs to 194 residues: NAD(P)H:quinone oxidoreductase (194 aa).

Belongs to the SsuE family. As to quaternary structure, homotetramer. It depends on FMN as a cofactor.

The enzyme catalyses a quinone + NADH + H(+) = a quinol + NAD(+). It carries out the reaction a quinone + NADPH + H(+) = a quinol + NADP(+). In terms of biological role, the enzyme apparently serves as a quinone reductase in connection with conjugation reactions of hydroquinones involved in detoxification pathways. The chain is NAD(P)H:quinone oxidoreductase from Solanum tuberosum (Potato).